The primary structure comprises 314 residues: Putative S-adenosyl-L-methionine-dependent methyltransferase MAP_0256 (314 aa).

Residues aspartate 132 and 161–162 (DL) each bind S-adenosyl-L-methionine.

Belongs to the UPF0677 family.

Exhibits S-adenosyl-L-methionine-dependent methyltransferase activity. In Mycolicibacterium paratuberculosis (strain ATCC BAA-968 / K-10) (Mycobacterium paratuberculosis), this protein is Putative S-adenosyl-L-methionine-dependent methyltransferase MAP_0256.